The primary structure comprises 415 residues: Protein PIN-LIKES 4 (415 aa).

Over 1 to 13 the chain is Lumenal; sequence MKLLELFIASSKP. Residues 14–34 form a helical membrane-spanning segment; sequence VVETLLITSVGFYLALDTVNL. The Cytoplasmic portion of the chain corresponds to 35–44; the sequence is LGHDARKHLN. Residues 45–61 traverse the membrane as a helical segment; it reads NIVFYVFSPSLIGSRLA. Over 62-75 the chain is Lumenal; that stretch reads DSVTYESLVKMWFM. The chain crosses the membrane as a helical span at residues 76–96; sequence PVNVLLTFMIGSLLGWIVIVI. Residues 97-106 lie on the Cytoplasmic side of the membrane; that stretch reads TKPPSQLRGL. The helical transmembrane segment at 107–127 threads the bilayer; the sequence is IISCCASGNLGTMPLIIIPAI. Over 128 to 143 the chain is Lumenal; that stretch reads CKEKGGPFGDSESCEK. A helical membrane pass occupies residues 144–161; it reads YGMGYVTLSMTAFFISVY. The Cytoplasmic segment spans residues 162-244; sequence KHDTNWYVSG…RVVSLSKKVN (83 aa). The chain crosses the membrane as a helical span at residues 245-265; the sequence is LGSIFAPATIAAIIALVIGLI. At 266–285 the chain is on the lumenal side; the sequence is TPLRNLIIGTVAPFRVIQDS. The helical transmembrane segment at 286-306 threads the bilayer; it reads LTLLGDGAIPAMTLILGGNLL. Over 307–322 the chain is Cytoplasmic; sequence KGMRRSEVRSSEMKNS. The helical transmembrane segment at 323 to 343 threads the bilayer; that stretch reads CIIGVLVARYILLPVSGVLLV. Over 344 to 355 the chain is Lumenal; that stretch reads RGAYKLDLVTSE. A helical transmembrane segment spans residues 356–376; it reads PLYQFVLLLQYAVPPAMNLGT. Over 377–389 the chain is Cytoplasmic; that stretch reads KTQLFGAGESECS. A helical transmembrane segment spans residues 390-410; that stretch reads VIMLWTYSLAAVSLTVWPTFF. At 411 to 415 the chain is on the lumenal side; sequence MWLVT.

Belongs to the auxin efflux carrier (TC 2.A.69.2) family. As to expression, expressed in seedlings, rosette and cauline leaves, stems, flowers and siliques.

Its subcellular location is the endoplasmic reticulum membrane. Functionally, involved in cellular auxin homeostasis by regulating auxin metabolism. Regulates intracellular auxin accumulation at the endoplasmic reticulum and thus auxin availability for nuclear auxin signaling. This is Protein PIN-LIKES 4 from Arabidopsis thaliana (Mouse-ear cress).